The primary structure comprises 701 residues: Elongation factor G 2 (701 aa).

The tr-type G domain maps to 8-290 (NRYRNIGIVA…AVIEFLPAPA (283 aa)). Residues 17 to 24 (AHVDAGKT), 88 to 92 (DTPGH), and 142 to 145 (NKMD) contribute to the GTP site.

Belongs to the TRAFAC class translation factor GTPase superfamily. Classic translation factor GTPase family. EF-G/EF-2 subfamily.

It is found in the cytoplasm. In terms of biological role, catalyzes the GTP-dependent ribosomal translocation step during translation elongation. During this step, the ribosome changes from the pre-translocational (PRE) to the post-translocational (POST) state as the newly formed A-site-bound peptidyl-tRNA and P-site-bound deacylated tRNA move to the P and E sites, respectively. Catalyzes the coordinated movement of the two tRNA molecules, the mRNA and conformational changes in the ribosome. This chain is Elongation factor G 2, found in Pseudoalteromonas atlantica (strain T6c / ATCC BAA-1087).